The following is a 521-amino-acid chain: Sphingolipid C9-methyltransferase 2 (521 aa).

2 helical membrane passes run 60-80 and 85-105; these read VLISILTIVPWWLSWKVGGGF and FFAIIVDLPMLAAWWLTISAI. Residues 225-226, 262-270, 288-293, and 318-319 contribute to the S-adenosyl-L-methionine site; these read YT, MLDIGCGWG, TLGRNQ, and YR.

Belongs to the CFA/CMAS family.

The protein resides in the membrane. It carries out the reaction a (4E,8E)-4-sphinga-4,8-dienine ceramide + S-adenosyl-L-methionine = a 9-methyl-(4E,8E)-sphinga-4,8-dienine ceramide + S-adenosyl-L-homocysteine + H(+). It participates in lipid metabolism; sphingolipid metabolism. Its function is as follows. Catalyzes methylation of the sphingoid base component of glucosylceramides (GluCers) at the C9-position. Sphingolipid C9-methylation requires 4,8-desaturated ceramides as substrates. Glucosylceramides play important roles in growth, differentiation and pathogenicity. The methyl group at the C9-position distinguishes fungal glucosylceramides from those of plants and animals and may thus play a role in host-pathogen interactions enabling the host to recognize the fungal attack and initiate specific defense responses. However, C-9 methylation of GlcCers is not essential for the sensitivity of F.graminearum to plant defensins MsDef1 and RsAFP2. In Gibberella zeae (strain ATCC MYA-4620 / CBS 123657 / FGSC 9075 / NRRL 31084 / PH-1) (Wheat head blight fungus), this protein is Sphingolipid C9-methyltransferase 2.